We begin with the raw amino-acid sequence, 1180 residues long: Chitin synthase 6 (1180 aa).

The next 2 helical transmembrane spans lie at 108 to 128 and 374 to 394; these read FTIC…IIAF and LLLA…IAAL. N-linked (GlcNAc...) asparagine glycosylation occurs at asparagine 737. A run of 3 helical transmembrane segments spans residues 762–782, 795–815, and 822–842; these read FIVF…VYLV, IPYI…ILFL, and YIGW…FLPI. Residues 1118–1175 enclose the DEK-C domain; sequence DPTDEEIKSAVQTYLANQPSLMNVTKRSVREALVAAFPNAELSYKKSMINKAIDDTLS.

This sequence belongs to the chitin synthase family. Class V subfamily.

Its subcellular location is the cell membrane. It localises to the cytoplasmic vesicle membrane. It carries out the reaction [(1-&gt;4)-N-acetyl-beta-D-glucosaminyl](n) + UDP-N-acetyl-alpha-D-glucosamine = [(1-&gt;4)-N-acetyl-beta-D-glucosaminyl](n+1) + UDP + H(+). Polymerizes chitin, a structural polymer of the cell wall and septum, by transferring the sugar moiety of UDP-GlcNAc to the non-reducing end of the growing chitin polymer. Plays a crucial role during infection and allows the fungus to overcome the resistance of the plant that checks growth of the pathogen and eventually eliminates it. The sequence is that of Chitin synthase 6 from Mycosarcoma maydis (Corn smut fungus).